Reading from the N-terminus, the 472-residue chain is Zinc finger CCCH domain-containing protein 59 (472 aa).

A disordered region spans residues Tyr-87–Gly-139. Residues Ser-145 to Ser-172 form a C3H1-type zinc finger. WD repeat units lie at residues Gly-185–Asn-226, His-261–Phe-301, His-310–Thr-347, Gln-350–Val-387, and Phe-436–Val-472.

The polypeptide is Zinc finger CCCH domain-containing protein 59 (ZFWD3) (Arabidopsis thaliana (Mouse-ear cress)).